The primary structure comprises 379 residues: Probable tRNA sulfurtransferase (379 aa).

The THUMP domain occupies 52–157 (DEFLDKLKFI…RHHAFVFCKI (106 aa)). Residues 175–176 (LL), R257, G279, and Q288 each bind ATP.

It belongs to the ThiI family.

Its subcellular location is the cytoplasm. It carries out the reaction [ThiI sulfur-carrier protein]-S-sulfanyl-L-cysteine + a uridine in tRNA + 2 reduced [2Fe-2S]-[ferredoxin] + ATP + H(+) = [ThiI sulfur-carrier protein]-L-cysteine + a 4-thiouridine in tRNA + 2 oxidized [2Fe-2S]-[ferredoxin] + AMP + diphosphate. It catalyses the reaction [ThiS sulfur-carrier protein]-C-terminal Gly-Gly-AMP + S-sulfanyl-L-cysteinyl-[cysteine desulfurase] + AH2 = [ThiS sulfur-carrier protein]-C-terminal-Gly-aminoethanethioate + L-cysteinyl-[cysteine desulfurase] + A + AMP + 2 H(+). Its pathway is cofactor biosynthesis; thiamine diphosphate biosynthesis. Functionally, catalyzes the ATP-dependent transfer of a sulfur to tRNA to produce 4-thiouridine in position 8 of tRNAs, which functions as a near-UV photosensor. Also catalyzes the transfer of sulfur to the sulfur carrier protein ThiS, forming ThiS-thiocarboxylate. This is a step in the synthesis of thiazole, in the thiamine biosynthesis pathway. The sulfur is donated as persulfide by IscS. The sequence is that of Probable tRNA sulfurtransferase from Mycoplasmopsis pulmonis (strain UAB CTIP) (Mycoplasma pulmonis).